The following is a 495-amino-acid chain: Autoinducer 2 import ATP-binding protein LsrA (495 aa).

2 ABC transporter domains span residues 5 to 233 (IEAH…TPVS) and 256 to 494 (AQDF…FGGQ). 37–44 (GGNGAGKS) is a binding site for ATP.

The protein belongs to the ABC transporter superfamily. AI-2 autoinducer porter (TC 3.A.1.2.8) family. The complex is composed of two ATP-binding proteins (LsrA), two transmembrane proteins (LsrC and LsrD) and a solute-binding protein (LsrB).

The protein resides in the cell inner membrane. The catalysed reaction is ATP + H2O + (2R,4S)-2-methyl-2,3,3,4-tetrahydroxytetrahydrofuran-[AI-2-binding protein]Side 1 = ADP + phosphate + (2R,4S)-2-methyl-2,3,3,4-tetrahydroxytetrahydrofuranSide 2 + [AI-2-binding protein]Side 1.. Part of the ABC transporter complex LsrABCD involved in autoinducer 2 (AI-2) import. Responsible for energy coupling to the transport system. The protein is Autoinducer 2 import ATP-binding protein LsrA (lsrA) of Enterobacter sp. (strain 638).